Reading from the N-terminus, the 973-residue chain is DNA repair protein rhp26 (973 aa).

The stretch at 35–107 (ESREIEKKRL…DIKRRLNNED (73 aa)) forms a coiled coil. Positions 230-251 (RDQASASENNKDRGEFEGKDEW) are disordered. A compositionally biased stretch (basic and acidic residues) spans 238–251 (NNKDRGEFEGKDEW). One can recognise a Helicase ATP-binding domain in the interval 289-490 (WELYCQEAGG…WNLFDFVFPG (202 aa)). 302-309 (DEMGLGKT) is an ATP binding site. The disordered stretch occupies residues 367 to 386 (SREKRQYESDASESEAEESK). Positions 441-444 (DEGH) match the DEAH box motif. The region spanning 629–789 (VIRALLTLWK…RRFFKMTDLH (161 aa)) is the Helicase C-terminal domain. Disordered stretches follow at residues 803–846 (ETGS…KGKK), 863–882 (KYKP…STLG), and 930–973 (AVSS…KQRR). Basic residues predominate over residues 834–846 (DRKKHKIHDKGKK). 2 stretches are compositionally biased toward polar residues: residues 868–882 (QESN…STLG) and 947–965 (STNV…SSTL).

It localises to the cytoplasm. The protein resides in the nucleus. In terms of biological role, involved in transcription-coupled repair (TCR). This is DNA repair protein rhp26 (rhp26) from Schizosaccharomyces pombe (strain 972 / ATCC 24843) (Fission yeast).